Reading from the N-terminus, the 284-residue chain is Pantothenate synthetase (284 aa).

ATP is bound at residue 30 to 37 (MGNLHDGH). Histidine 37 acts as the Proton donor in catalysis. (R)-pantoate is bound at residue glutamine 61. Glutamine 61 lines the beta-alanine pocket. 149 to 152 (GEKD) serves as a coordination point for ATP. Glutamine 155 serves as a coordination point for (R)-pantoate. Residues valine 178 and 186–189 (LSSR) each bind ATP.

This sequence belongs to the pantothenate synthetase family. As to quaternary structure, homodimer.

The protein resides in the cytoplasm. The enzyme catalyses (R)-pantoate + beta-alanine + ATP = (R)-pantothenate + AMP + diphosphate + H(+). It functions in the pathway cofactor biosynthesis; (R)-pantothenate biosynthesis; (R)-pantothenate from (R)-pantoate and beta-alanine: step 1/1. Its function is as follows. Catalyzes the condensation of pantoate with beta-alanine in an ATP-dependent reaction via a pantoyl-adenylate intermediate. The chain is Pantothenate synthetase from Photorhabdus laumondii subsp. laumondii (strain DSM 15139 / CIP 105565 / TT01) (Photorhabdus luminescens subsp. laumondii).